Reading from the N-terminus, the 440-residue chain is 2-phosphinomethylmalate synthase (440 aa).

The 275-residue stretch at 39–313 (VWLSETTHRD…GARVNLPAVN (275 aa)) folds into the Pyruvate carboxyltransferase domain.

It belongs to the alpha-IPM synthase/homocitrate synthase family. Homodimer. The cofactor is Mn(2+). It depends on Co(2+) as a cofactor.

It carries out the reaction 3-(hydrohydroxyphosphoryl)pyruvate + acetyl-CoA + H2O = phosphinomethylmalate + CoA + H(+). The protein operates within secondary metabolite biosynthesis; bialaphos biosynthesis. With respect to regulation, strongly inhibited by p-chloromercuribenzoate (pCMB), iodoacetamide (IA) and EDTA. Its function is as follows. Involved in the biosynthesis of phosphinothricin tripeptide (PTT), also known as bialaphos (BA), a natural-product antibiotic and potent herbicide. Catalyzes the condensation berween phosphinopyruvic acid (PPA), an analog of oxalacetic acid, and acetyl-CoA to form R-2-phosphinomethylmalic acid (PMM). Can also act on oxaloacetate, but shows no activity when acetyl-CoA is substituted by propionyl-CoA or butyryl-CoA. The protein is 2-phosphinomethylmalate synthase of Streptomyces hygroscopicus.